Consider the following 169-residue polypeptide: Shikimate kinase (169 aa).

Residue glycine 12 to threonine 17 coordinates ATP. Serine 16 is a Mg(2+) binding site. Substrate is bound by residues aspartate 34, arginine 58, and glycine 80. Arginine 117 serves as a coordination point for ATP. Arginine 136 provides a ligand contact to substrate.

This sequence belongs to the shikimate kinase family. In terms of assembly, monomer. Mg(2+) is required as a cofactor.

It is found in the cytoplasm. It catalyses the reaction shikimate + ATP = 3-phosphoshikimate + ADP + H(+). It functions in the pathway metabolic intermediate biosynthesis; chorismate biosynthesis; chorismate from D-erythrose 4-phosphate and phosphoenolpyruvate: step 5/7. In terms of biological role, catalyzes the specific phosphorylation of the 3-hydroxyl group of shikimic acid using ATP as a cosubstrate. In Rhodococcus erythropolis (strain PR4 / NBRC 100887), this protein is Shikimate kinase.